Here is a 57-residue protein sequence, read N- to C-terminus: Sperm histone (57 aa).

The interval 1 to 57 (MARYRRTRTRSRSRRRRRSRRRRSSRRRRYGRSRRSYRSVGRRRRRYGRRRRRRRRY) is disordered. Thr9 carries the post-translational modification Phosphothreonine.

It belongs to the protamine P1 family. As to expression, testis.

It localises to the nucleus. It is found in the chromosome. Its function is as follows. Protamines substitute for histones in the chromatin of sperm during the haploid phase of spermatogenesis. They compact sperm DNA into a highly condensed, stable and inactive complex. This Coturnix japonica (Japanese quail) protein is Sperm histone.